A 396-amino-acid chain; its full sequence is G-protein coupled receptor 84 (396 aa).

At 1-26 the chain is on the extracellular side; sequence MWNSSDANFSCYHESVLGYRYVAVSW. Residues asparagine 3 and asparagine 8 are each glycosylated (N-linked (GlcNAc...) asparagine). A helical membrane pass occupies residues 27 to 47; the sequence is GVVVAVTGTVGNVLTLLALAI. The Cytoplasmic segment spans residues 48–57; it reads QPKLRTRFNL. Residues 58–78 traverse the membrane as a helical segment; that stretch reads LIANLTLADLLYCTLLQPFSV. Over 79–94 the chain is Extracellular; sequence DTYLHLHWRTGATFCR. The helical transmembrane segment at 95 to 115 threads the bilayer; the sequence is VFGLLLFASNSVSILTLCLIA. Topologically, residues 116–144 are cytoplasmic; it reads LGRYLLIAHPKLFPQVFSAKGIVLALVST. The chain crosses the membrane as a helical span at residues 145–165; it reads WVVGVASFAPLWPIYILVPVV. The Extracellular segment spans residues 166-180; sequence CTCSFDRIRGRPYTT. Residues 181-201 form a helical membrane-spanning segment; the sequence is ILMGIYFVLGLSSVGIFYCLI. Topologically, residues 202–320 are cytoplasmic; sequence HRQVKRAAQA…SSEFGKVTRM (119 aa). Phosphoserine is present on residues serine 221 and serine 224. Residues 244 to 311 are disordered; that stretch reads RLASGGPSEG…KGARRAPDSS (68 aa). Low complexity predominate over residues 247–260; sequence SGGPSEGISSEPVS. Residues threonine 263 and threonine 264 each carry the phosphothreonine modification. Residues 321–341 form a helical membrane-spanning segment; that stretch reads CFAVFLCFALSYIPFLLLNIL. Residues 342 to 352 are Extracellular-facing; the sequence is DARVQAPRVVH. Residues 353 to 373 form a helical membrane-spanning segment; that stretch reads MLAANLTWLNGCINPVLYAAM. Over 374 to 396 the chain is Cytoplasmic; that stretch reads NRQFRQAYGSILKRGPRSFHRLH.

This sequence belongs to the G-protein coupled receptor 1 family. In terms of assembly, interacts with ARRB2 and ARR3. Post-translationally, phosphorylated by a subset of GPR84-activating ligands. Constitutively phosphorylated at Ser-221 and Ser-224 in the absence of 2-HTP. By contrast, Thr-263 and Thr-264 are phosphorylated only following prior cell treatment with 2-HTP. In terms of tissue distribution, expressed predominantly in hematopoietic tissues. High levels detected in the bone marrow and lower levels in the peripheral leukocytes and lung. Also expressed in brain, heart, muscle, colon, thymus, spleen, kidney, liver, placenta and intestine. Within the leukocyte population expression is higher in neutrophils and eosinophils relative to T- or B-lymphocytes.

It is found in the cell membrane. G protein-coupled receptor that responds endogenously to dietary fatty acids or nutrient, specifically medium-chain free fatty acid (FFA) with carbon chain lengths of C9 to C14. Capric acid (C10:0), undecanoic acid (C11:0) and lauric acid (C12:0) are the most potent agonists. In immune cells, functions as a pro-inflammatory receptor via 6-OAU and promotes the expression of pro-inflammatory mediators such as TNFalpha, IL-6 and IL-12B as well as stimulating chemotactic responses through activation of signaling mediators AKT, ERK and NF-kappa-B. In addition, triggers increased bacterial adhesion and phagocytosis in macrophages and regulates pro-inflammatory function via enhancing NLRP3 inflammasome activation. Also plays an important role in inflammation by modulating neutrophil functions. Mechanistically, promotes neutrophil chemotaxis, reactive oxygen species (ROS) production and degranulation via LYN-AKT/ERK pathway. To regulate ROS, communicates with the two formyl peptide receptors FPR2 and FPR1 to control the NADPH oxidase activity in neutrophils. This is G-protein coupled receptor 84 (GPR84) from Homo sapiens (Human).